Consider the following 286-residue polypeptide: Undecaprenyl-diphosphatase (286 aa).

8 helical membrane passes run 17–37, 49–69, 98–118, 126–146, 159–179, 204–224, 232–252, and 261–281; these read VVLG…TAHL, PGVA…IGYF, IAIA…KLFW, LRSV…LALA, VQGL…IPGV, FLLG…GAFA, LPML…IAWL, and TWPF…LVLA.

It belongs to the UppP family.

Its subcellular location is the cell inner membrane. It catalyses the reaction di-trans,octa-cis-undecaprenyl diphosphate + H2O = di-trans,octa-cis-undecaprenyl phosphate + phosphate + H(+). Functionally, catalyzes the dephosphorylation of undecaprenyl diphosphate (UPP). Confers resistance to bacitracin. The sequence is that of Undecaprenyl-diphosphatase from Synechococcus sp. (strain RCC307).